The following is a 535-amino-acid chain: CTP synthase (535 aa).

Residues 1 to 268 form an amidoligase domain region; sequence MKTKYIFVTG…DSLVCKKLEL (268 aa). Ser14 contributes to the CTP binding site. Residue Ser14 coordinates UTP. 15-20 provides a ligand contact to ATP; sequence SLGKGI. Tyr55 is an L-glutamine binding site. Asp72 contributes to the ATP binding site. Residues Asp72 and Glu142 each coordinate Mg(2+). CTP-binding positions include 149 to 151, 189 to 194, and Lys225; these read DIE and KTKPTQ. UTP contacts are provided by residues 189-194 and Lys225; that span reads KTKPTQ. A Glutamine amidotransferase type-1 domain is found at 293-535; that stretch reads TIGLVGKYVE…IKVACTVKEK (243 aa). Gly355 lines the L-glutamine pocket. The active-site Nucleophile; for glutamine hydrolysis is Cys382. Residues 383–386, Glu406, and Arg463 contribute to the L-glutamine site; that span reads LGMQ. Catalysis depends on residues His508 and Glu510.

The protein belongs to the CTP synthase family. Homotetramer.

The enzyme catalyses UTP + L-glutamine + ATP + H2O = CTP + L-glutamate + ADP + phosphate + 2 H(+). The catalysed reaction is L-glutamine + H2O = L-glutamate + NH4(+). It carries out the reaction UTP + NH4(+) + ATP = CTP + ADP + phosphate + 2 H(+). It functions in the pathway pyrimidine metabolism; CTP biosynthesis via de novo pathway; CTP from UDP: step 2/2. With respect to regulation, allosterically activated by GTP, when glutamine is the substrate; GTP has no effect on the reaction when ammonia is the substrate. The allosteric effector GTP functions by stabilizing the protein conformation that binds the tetrahedral intermediate(s) formed during glutamine hydrolysis. Inhibited by the product CTP, via allosteric rather than competitive inhibition. In terms of biological role, catalyzes the ATP-dependent amination of UTP to CTP with either L-glutamine or ammonia as the source of nitrogen. Regulates intracellular CTP levels through interactions with the four ribonucleotide triphosphates. In Clostridium acetobutylicum (strain ATCC 824 / DSM 792 / JCM 1419 / IAM 19013 / LMG 5710 / NBRC 13948 / NRRL B-527 / VKM B-1787 / 2291 / W), this protein is CTP synthase.